A 515-amino-acid chain; its full sequence is Maturase K (515 aa).

It belongs to the intron maturase 2 family. MatK subfamily.

It localises to the plastid. Its subcellular location is the chloroplast. Usually encoded in the trnK tRNA gene intron. Probably assists in splicing its own and other chloroplast group II introns. This Pinus sibirica (Siberian pine) protein is Maturase K.